A 155-amino-acid chain; its full sequence is Large ribosomal subunit protein eL24A (155 aa).

Serine 7 is subject to Phosphoserine. Residues 66-155 (EVAKKRSRKT…AFQKVAATSR (90 aa)) form a disordered region. Residues 89-129 (LIKERRSLKPEVRKANREEKLKANKEKKKAEKAARKAEKAK) show a composition bias toward basic and acidic residues. Over residues 131–142 (AGTQSSKFSKQQ) the composition is skewed to polar residues.

Belongs to the eukaryotic ribosomal protein eL24 family. As to quaternary structure, component of the large ribosomal subunit (LSU). Mature yeast ribosomes consist of a small (40S) and a large (60S) subunit. The 40S small subunit contains 1 molecule of ribosomal RNA (18S rRNA) and 33 different proteins (encoded by 57 genes). The large 60S subunit contains 3 rRNA molecules (25S, 5.8S and 5S rRNA) and 46 different proteins (encoded by 81 genes).

The protein localises to the cytoplasm. Its function is as follows. Component of the ribosome, a large ribonucleoprotein complex responsible for the synthesis of proteins in the cell. The small ribosomal subunit (SSU) binds messenger RNAs (mRNAs) and translates the encoded message by selecting cognate aminoacyl-transfer RNA (tRNA) molecules. The large subunit (LSU) contains the ribosomal catalytic site termed the peptidyl transferase center (PTC), which catalyzes the formation of peptide bonds, thereby polymerizing the amino acids delivered by tRNAs into a polypeptide chain. The nascent polypeptides leave the ribosome through a tunnel in the LSU and interact with protein factors that function in enzymatic processing, targeting, and the membrane insertion of nascent chains at the exit of the ribosomal tunnel. This Saccharomyces cerevisiae (strain ATCC 204508 / S288c) (Baker's yeast) protein is Large ribosomal subunit protein eL24A.